The sequence spans 348 residues: Flap endonuclease 1 (348 aa).

Positions 1–98 (MGLAELRELI…ETLERRRERK (98 aa)) are N-domain. Residues Asp-28, Asp-80, Glu-149, Glu-151, Asp-170, Asp-172, and Asp-234 each contribute to the Mg(2+) site. Residues 113-256 (EREKYARQVA…RALQLIRKYG (144 aa)) are I-domain. Residues 340 to 348 (RQETLDAFF) are interaction with PCNA.

This sequence belongs to the XPG/RAD2 endonuclease family. FEN1 subfamily. In terms of assembly, interacts with PCNA. PCNA stimulates the nuclease activity without altering cleavage specificity. Mg(2+) is required as a cofactor.

Its function is as follows. Structure-specific nuclease with 5'-flap endonuclease and 5'-3' exonuclease activities involved in DNA replication and repair. During DNA replication, cleaves the 5'-overhanging flap structure that is generated by displacement synthesis when DNA polymerase encounters the 5'-end of a downstream Okazaki fragment. Binds the unpaired 3'-DNA end and kinks the DNA to facilitate 5' cleavage specificity. Cleaves one nucleotide into the double-stranded DNA from the junction in flap DNA, leaving a nick for ligation. Also involved in the base excision repair (BER) pathway. Acts as a genome stabilization factor that prevents flaps from equilibrating into structures that lead to duplications and deletions. Also possesses 5'-3' exonuclease activity on nicked or gapped double-stranded DNA. The polypeptide is Flap endonuclease 1 (Methanopyrus kandleri (strain AV19 / DSM 6324 / JCM 9639 / NBRC 100938)).